We begin with the raw amino-acid sequence, 242 residues long: uncharacterized protein (242 aa).

A run of 3 helical transmembrane segments spans residues 75 to 95, 116 to 136, and 176 to 196; these read YAIFHIFLPFILTLLLYHNFY, IVLIFTYVMTVIIVYFSFSLI, and IQGLAHIILSLLLFILGLEVI. The tract at residues 204-242 is disordered; that stretch reads DVEMSSMRGQAITTEPASDNTMAEGTDCNTSKDVESGSS. Positions 210–232 are enriched in polar residues; that stretch reads MRGQAITTEPASDNTMAEGTDCN. Basic and acidic residues predominate over residues 233 to 242; sequence TSKDVESGSS.

Its subcellular location is the cytoplasm. It localises to the membrane. This is an uncharacterized protein from Schizosaccharomyces pombe (strain 972 / ATCC 24843) (Fission yeast).